The following is a 165-amino-acid chain: NADH-quinone oxidoreductase subunit I (165 aa).

4Fe-4S ferredoxin-type domains are found at residues 57-86 (RRYE…IESD) and 96-125 (SRYD…ETHI). [4Fe-4S] cluster contacts are provided by Cys-66, Cys-69, Cys-72, Cys-76, Cys-105, Cys-108, Cys-111, and Cys-115.

It belongs to the complex I 23 kDa subunit family. NDH-1 is composed of 14 different subunits. Subunits NuoA, H, J, K, L, M, N constitute the membrane sector of the complex. [4Fe-4S] cluster is required as a cofactor.

The protein resides in the cell inner membrane. It catalyses the reaction a quinone + NADH + 5 H(+)(in) = a quinol + NAD(+) + 4 H(+)(out). Its function is as follows. NDH-1 shuttles electrons from NADH, via FMN and iron-sulfur (Fe-S) centers, to quinones in the respiratory chain. The immediate electron acceptor for the enzyme in this species is believed to be ubiquinone. Couples the redox reaction to proton translocation (for every two electrons transferred, four hydrogen ions are translocated across the cytoplasmic membrane), and thus conserves the redox energy in a proton gradient. This Polaromonas naphthalenivorans (strain CJ2) protein is NADH-quinone oxidoreductase subunit I.